Reading from the N-terminus, the 428-residue chain is Elongation factor 1-alpha (428 aa).

The tr-type G domain maps to 5–225; that stretch reads KPVLNVAFIG…DKFQPPEKPT (221 aa). Residues 14–21 are G1; it reads GHVDAGKS. 14-21 is a GTP binding site; it reads GHVDAGKS. Serine 21 is a Mg(2+) binding site. The G2 stretch occupies residues 70–74; it reads GVTID. Residues 91 to 94 are G3; it reads DCPG. GTP is bound by residues 91-95 and 149-152; these read DCPGH and NKMD. The tract at residues 149–152 is G4; sequence NKMD. A G5 region spans residues 189-191; that stretch reads ASL.

This sequence belongs to the TRAFAC class translation factor GTPase superfamily. Classic translation factor GTPase family. EF-Tu/EF-1A subfamily.

Its subcellular location is the cytoplasm. It catalyses the reaction GTP + H2O = GDP + phosphate + H(+). Its function is as follows. GTP hydrolase that promotes the GTP-dependent binding of aminoacyl-tRNA to the A-site of ribosomes during protein biosynthesis. The polypeptide is Elongation factor 1-alpha (Methanocaldococcus jannaschii (strain ATCC 43067 / DSM 2661 / JAL-1 / JCM 10045 / NBRC 100440) (Methanococcus jannaschii)).